We begin with the raw amino-acid sequence, 384 residues long: Urea transporter 1 (384 aa).

The next 5 helical transmembrane spans lie at 61 to 81, 85 to 105, 111 to 131, 138 to 158, and 168 to 188; these read ISQVVFVSNPISGILILAGLL, PWWALCGCVGTVVSTLTALLL, AIAAGLQGYNATLVGILMAVF, FWWLIFPVSAMSMTCPVFSSA, and LPVFTLPFNMALSLYLSATGH. Residue N206 is glycosylated (N-linked (GlcNAc...) asparagine). The next 4 helical transmembrane spans lie at 250–270, 279–299, 305–325, and 327–347; these read LMCLHAAIGSLLGVIAGLSLA, GLWGFNSSLACIAIGGMFMAL, LLALACALFTAYFGACMTHLM, and AVHLPACTWSFCLATLLFLLL.

The protein belongs to the urea transporter family. Homotrimer; each subunit contains a pore through which urea permeates. Identified in a complex with STOM. Expressed in brain, spleen, kidney, testis and lung, with highest levels in brain.

The protein localises to the cell membrane. It is found in the basolateral cell membrane. The catalysed reaction is urea(in) = urea(out). Functionally, mediates the transport of urea driven by a concentration gradient across the cell membrane. Mediates the transport of urea across the cell membranes of erythrocytes and the renal inner medullary collecting duct which is critical to the urinary concentrating mechanism. Facilitates water transport in erythrocytes. This is Urea transporter 1 (Slc14a1) from Rattus norvegicus (Rat).